Consider the following 565-residue polypeptide: Effector protease OspD3 (565 aa).

This sequence belongs to the Toxin_15 family.

The protein resides in the secreted. Its function is as follows. Effector protease that disrupts necroptosis in host cells by mediating proteolytic cleavage of host RIPK1 and RIPK3. In Shigella flexneri, this protein is Effector protease OspD3.